Reading from the N-terminus, the 673-residue chain is DNA ligase (673 aa).

34–38 lines the NAD(+) pocket; the sequence is DAAFD. A disordered region spans residues 54–73; that stretch reads LRRPDSPTQRVGGATAPDFA. NAD(+) contacts are provided by residues 83–84 and Glu114; that span reads SL. Lys116 functions as the N6-AMP-lysine intermediate in the catalytic mechanism. Residues Arg137, Glu176, Lys292, and Lys316 each coordinate NAD(+). The Zn(2+) site is built by Cys410, Cys413, Cys428, and Cys433. Residues 594 to 673 enclose the BRCT domain; that stretch reads PAEGPLAGMT…DEFCERYLQG (80 aa).

The protein belongs to the NAD-dependent DNA ligase family. LigA subfamily. Mg(2+) serves as cofactor. Mn(2+) is required as a cofactor.

The enzyme catalyses NAD(+) + (deoxyribonucleotide)n-3'-hydroxyl + 5'-phospho-(deoxyribonucleotide)m = (deoxyribonucleotide)n+m + AMP + beta-nicotinamide D-nucleotide.. In terms of biological role, DNA ligase that catalyzes the formation of phosphodiester linkages between 5'-phosphoryl and 3'-hydroxyl groups in double-stranded DNA using NAD as a coenzyme and as the energy source for the reaction. It is essential for DNA replication and repair of damaged DNA. This Symbiobacterium thermophilum (strain DSM 24528 / JCM 14929 / IAM 14863 / T) protein is DNA ligase.